The chain runs to 214 residues: ER lumen protein-retaining receptor 3 (214 aa).

At 1-4 the chain is on the lumenal side; the sequence is MNIF. Residues 5 to 24 form a helical membrane-spanning segment; sequence RILGDVSHLLAIIILLLKMW. At 25–32 the chain is on the cytoplasmic side; the sequence is KSKSCAGI. A helical membrane pass occupies residues 33–52; it reads SGKSQLLFALVFTTRYLDLF. The interval 47–48 is interaction with the K-D-E-L motif on target proteins; it reads RY. The Lumenal segment spans residues 53-58; it reads TVFISP. The chain crosses the membrane as a helical span at residues 59–79; it reads YNTVMKIIFLACAYVTVYLIY. The Cytoplasmic portion of the chain corresponds to 80–92; that stretch reads GKLRKSYDSENDT. A helical membrane pass occupies residues 93 to 110; the sequence is FRLEFLLVPVIGLSFLEN. Over 111 to 116 the chain is Lumenal; it reads YEFTPL. A helical membrane pass occupies residues 117-135; that stretch reads EILWTFSIYLESVAILPQL. Residues 136–149 lie on the Cytoplasmic side of the membrane; that stretch reads FMISKTGEAESITT. A helical transmembrane segment spans residues 150–168; that stretch reads HYLFFLGLYRVLYLANWIW. Residues 159-169 form an interaction with the K-D-E-L motif on target proteins region; the sequence is RVLYLANWIWR. Over 169–178 the chain is Lumenal; that stretch reads RYHTEKFYDQ. Residues 179-199 traverse the membrane as a helical segment; that stretch reads IAVVSGVVQTIFYFDFFYLYV. Topologically, residues 200 to 214 are cytoplasmic; that stretch reads TKVLKGKKLSLPMPV. The interval 204-207 is important for recycling of cargo proteins with the sequence motif K-D-E-L from the Golgi to the endoplasmic reticulum; the sequence is KGKK.

It belongs to the ERD2 family.

The protein resides in the endoplasmic reticulum membrane. Its subcellular location is the golgi apparatus membrane. It is found in the cytoplasmic vesicle. It localises to the COPI-coated vesicle membrane. Its function is as follows. Receptor for the C-terminal sequence motif K-D-E-L that is present on endoplasmic reticulum resident proteins and that mediates their recycling from the Golgi back to the endoplasmic reticulum. This chain is ER lumen protein-retaining receptor 3 (kdelr3), found in Xenopus laevis (African clawed frog).